The chain runs to 258 residues: MEVMDSCQFSPSELFYDSSCLSSPEGEFPEDFEPRELPPFGAPAPTEPACPEEEEHVRAPSGHHQAGHCLMWACKACKRKSTTMDRRKAATMRERRRLKKVNQAFETLKRCTTANPNQRLPKVEILRNAIRYIESLQELLREQVENYYHLPGQSCSEPTSPSSSCSDVMADSRSPVWPARGSSFEAGYCREMPHGYATEQSGALSSLDCLSSIVDRLSPAEEPGLPLRHAGSLSPGASIDSGPGTPGSPPPRRTYQAL.

The tract at residues 21–50 is disordered; it reads LSSPEGEFPEDFEPRELPPFGAPAPTEPAC. The region spanning 85–136 is the bHLH domain; the sequence is DRRKAATMRERRRLKKVNQAFETLKRCTTANPNQRLPKVEILRNAIRYIESL. The disordered stretch occupies residues 220–258; that stretch reads AEEPGLPLRHAGSLSPGASIDSGPGTPGSPPPRRTYQAL.

In terms of assembly, efficient DNA binding requires dimerization with another bHLH protein.

It localises to the nucleus. In terms of biological role, acts as a transcriptional activator that promotes transcription of muscle-specific target genes and plays a role in muscle differentiation. Induces fibroblasts to differentiate into myoblasts. Probable sequence specific DNA-binding protein. The polypeptide is Myogenic factor 5 (MYF5) (Gallus gallus (Chicken)).